The chain runs to 721 residues: Catalase-peroxidase (721 aa).

Residues Trp89–Tyr212 constitute a cross-link (tryptophyl-tyrosyl-methioninium (Trp-Tyr) (with M-238)). The active-site Proton acceptor is the His90. A cross-link (tryptophyl-tyrosyl-methioninium (Tyr-Met) (with W-89)) is located at residues Tyr212–Met238. His253 is a binding site for heme b.

This sequence belongs to the peroxidase family. Peroxidase/catalase subfamily. Homodimer or homotetramer. Requires heme b as cofactor. Post-translationally, formation of the three residue Trp-Tyr-Met cross-link is important for the catalase, but not the peroxidase activity of the enzyme.

The catalysed reaction is H2O2 + AH2 = A + 2 H2O. It carries out the reaction 2 H2O2 = O2 + 2 H2O. Its function is as follows. Bifunctional enzyme with both catalase and broad-spectrum peroxidase activity. The chain is Catalase-peroxidase from Shewanella baltica (strain OS155 / ATCC BAA-1091).